A 78-amino-acid polypeptide reads, in one-letter code: UPF0154 protein SSU98_1719 (78 aa).

The chain crosses the membrane as a helical span at residues Leu3–Tyr23.

The protein belongs to the UPF0154 family.

The protein resides in the cell membrane. The chain is UPF0154 protein SSU98_1719 from Streptococcus suis (strain 98HAH33).